Here is a 473-residue protein sequence, read N- to C-terminus: ATP synthase subunit beta (473 aa).

158–165 is an ATP binding site; the sequence is GGAGVGKT.

This sequence belongs to the ATPase alpha/beta chains family. In terms of assembly, F-type ATPases have 2 components, CF(1) - the catalytic core - and CF(0) - the membrane proton channel. CF(1) has five subunits: alpha(3), beta(3), gamma(1), delta(1), epsilon(1). CF(0) has three main subunits: a(1), b(2) and c(9-12). The alpha and beta chains form an alternating ring which encloses part of the gamma chain. CF(1) is attached to CF(0) by a central stalk formed by the gamma and epsilon chains, while a peripheral stalk is formed by the delta and b chains.

The protein localises to the cell membrane. The enzyme catalyses ATP + H2O + 4 H(+)(in) = ADP + phosphate + 5 H(+)(out). In terms of biological role, produces ATP from ADP in the presence of a proton gradient across the membrane. The catalytic sites are hosted primarily by the beta subunits. The protein is ATP synthase subunit beta of Bacillus velezensis (strain DSM 23117 / BGSC 10A6 / LMG 26770 / FZB42) (Bacillus amyloliquefaciens subsp. plantarum).